We begin with the raw amino-acid sequence, 114 residues long: Protein U68 (114 aa).

It belongs to the herpesviridae UL96 family.

In Human herpesvirus 6A (strain Uganda-1102) (HHV-6 variant A), this protein is Protein U68 (U68).